We begin with the raw amino-acid sequence, 150 residues long: Aspartate carbamoyltransferase regulatory chain (150 aa).

Positions 105, 110, 133, and 136 each coordinate Zn(2+).

Belongs to the PyrI family. In terms of assembly, contains catalytic and regulatory chains. Zn(2+) is required as a cofactor.

In terms of biological role, involved in allosteric regulation of aspartate carbamoyltransferase. This Thermococcus sibiricus (strain DSM 12597 / MM 739) protein is Aspartate carbamoyltransferase regulatory chain.